Consider the following 248-residue polypeptide: Probable transcriptional regulatory protein AZC_0510 (248 aa).

This sequence belongs to the TACO1 family.

Its subcellular location is the cytoplasm. This chain is Probable transcriptional regulatory protein AZC_0510, found in Azorhizobium caulinodans (strain ATCC 43989 / DSM 5975 / JCM 20966 / LMG 6465 / NBRC 14845 / NCIMB 13405 / ORS 571).